Consider the following 276-residue polypeptide: Putative phosphoenolpyruvate synthase regulatory protein (276 aa).

156-163 is a binding site for ADP; that stretch reads GVSRSGKT.

This sequence belongs to the pyruvate, phosphate/water dikinase regulatory protein family. PSRP subfamily.

It carries out the reaction [pyruvate, water dikinase] + ADP = [pyruvate, water dikinase]-phosphate + AMP + H(+). The catalysed reaction is [pyruvate, water dikinase]-phosphate + phosphate + H(+) = [pyruvate, water dikinase] + diphosphate. Its function is as follows. Bifunctional serine/threonine kinase and phosphorylase involved in the regulation of the phosphoenolpyruvate synthase (PEPS) by catalyzing its phosphorylation/dephosphorylation. This is Putative phosphoenolpyruvate synthase regulatory protein from Acidovorax ebreus (strain TPSY) (Diaphorobacter sp. (strain TPSY)).